Reading from the N-terminus, the 414-residue chain is TAR DNA-binding protein 43 (414 aa).

Residues lysine 79, lysine 84, lysine 95, lysine 102, and lysine 181 each participate in a glycyl lysine isopeptide (Lys-Gly) (interchain with G-Cter in SUMO2) cross-link. RRM domains lie at 104–200 (SDLI…RCTE) and 191–262 (RKVF…NAEP). Serine 183 is modified (phosphoserine). Residues 216–414 (EVVDVFIPKP…MDSKSSGWGM (199 aa)) are interaction with UBQLN2. Basic and acidic residues predominate over residues 261–274 (EPKHNSNRQLERSG). Disordered stretches follow at residues 261–301 (EPKH…GLGN) and 341–414 (ASQQ…GWGM). Lysine 263 is covalently cross-linked (Glycyl lysine isopeptide (Lys-Gly) (interchain with G-Cter in SUMO2)). A compositionally biased stretch (gly residues) spans 275-301 (RFGGNPGGFGNQGGFGNSRGGGAGLGN). Serine 292 is modified (phosphoserine). Arginine 293 carries the post-translational modification Omega-N-methylarginine. 2 stretches are compositionally biased toward low complexity: residues 342–358 (SQQN…SQGS) and 368–392 (GSGN…SNAG). Residues 393 to 402 (SGSGFNGGFG) show a composition bias toward gly residues. Positions 405 to 414 (MDSKSSGWGM) are enriched in polar residues.

As to quaternary structure, homodimer. Homooligomer (via its N-terminal domain). Interacts with BRDT. Binds specifically to pyrimidine-rich motifs of TAR DNA and to single stranded TG repeated sequences. Binds to RNA, specifically to UG repeated sequences with a minimum of six contiguous repeats. Interacts with ATXN2; the interaction is RNA-dependent. Interacts with MATR3. Interacts with UBQLN2. Interacts with HNRNPA2B1. Interacts with ZNF106. Interacts with CNOT7/CAF1. Interacts with CRY2. Interacts with PPIA/CYPA; the interaction is dependent on RNA-binding activity of TARDBP and PPIase activity of PPIA/CYPA. Acetylation of PPIA/CYPA at 'Lys-125' favors the interaction of TARDBP with PPIA/CYPA. Post-translationally, hyperphosphorylated. Ubiquitinated.

It localises to the nucleus. The protein resides in the cytoplasm. The protein localises to the stress granule. It is found in the mitochondrion. RNA-binding protein that is involved in various steps of RNA biogenesis and processing. Preferentially binds, via its two RNA recognition motifs RRM1 and RRM2, to GU-repeats on RNA molecules predominantly localized within long introns and in the 3'UTR of mRNAs. In turn, regulates the splicing of many non-coding and protein-coding RNAs including proteins involved in neuronal survival, as well as mRNAs that encode proteins relevant for neurodegenerative diseases. Plays a role in maintaining mitochondrial homeostasis by regulating the processing of mitochondrial transcripts. Also regulates mRNA stability by recruiting CNOT7/CAF1 deadenylase on mRNA 3'UTR leading to poly(A) tail deadenylation and thus shortening. In response to oxidative insult, associates with stalled ribosomes localized to stress granules (SGs) and contributes to cell survival. Also participates in the normal skeletal muscle formation and regeneration, forming cytoplasmic myo-granules and binding mRNAs that encode sarcomeric proteins. Plays a role in the maintenance of the circadian clock periodicity via stabilization of the CRY1 and CRY2 proteins in a FBXL3-dependent manner. Negatively regulates the expression of CDK6. Regulates the expression of HDAC6, ATG7 and VCP in a PPIA/CYPA-dependent manner. The polypeptide is TAR DNA-binding protein 43 (Tardbp) (Mus musculus (Mouse)).